Here is a 162-residue protein sequence, read N- to C-terminus: Interleukin-15 (162 aa).

Residues 1 to 29 form the signal peptide; that stretch reads MRILKPYLRSTSIQCYLCLLLNSHFLTEA. The propeptide occupies 30-48; sequence GIHVFILGCISAGLPKTEA. Intrachain disulfides connect cysteine 83-cysteine 133 and cysteine 90-cysteine 136. Asparagine 113, asparagine 121, and asparagine 127 each carry an N-linked (GlcNAc...) asparagine glycan.

The protein belongs to the IL-15/IL-21 family.

The protein resides in the secreted. Cytokine that plays a major role in the development of inflammatory and protective immune responses to microbial invaders and parasites by modulating immune cells of both the innate and adaptive immune systems. Stimulates the proliferation of natural killer cells, T-cells and B-cells and promotes the secretion of several cytokines. In monocytes, induces the production of IL8 and monocyte chemotactic protein 1/CCL2, two chemokines that attract neutrophils and monocytes respectively to sites of infection. Unlike most cytokines, which are secreted in soluble form, IL15 is expressed in association with its high affinity IL15RA on the surface of IL15-producing cells and delivers signals to target cells that express IL2RB and IL2RG receptor subunits. Binding to its receptor triggers the phosphorylation of JAK1 and JAK3 and the recruitment and subsequent phosphorylation of signal transducer and activator of transcription-3/STAT3 and STAT5. In mast cells, induces the rapid tyrosine phosphorylation of STAT6 and thereby controls mast cell survival and release of cytokines such as IL4. The protein is Interleukin-15 (IL15) of Ovis aries (Sheep).